A 132-amino-acid chain; its full sequence is Transcription antitermination protein NusB (132 aa).

It belongs to the NusB family.

Its function is as follows. Involved in transcription antitermination. Required for transcription of ribosomal RNA (rRNA) genes. Binds specifically to the boxA antiterminator sequence of the ribosomal RNA (rrn) operons. In Campylobacter lari (strain RM2100 / D67 / ATCC BAA-1060), this protein is Transcription antitermination protein NusB.